We begin with the raw amino-acid sequence, 607 residues long: MYPPRRIEIPCKPGVYRFEDENGRILYVGKAKNLRNRLGSYFTNARRGRRISYMLSISKKVGWTCVADDIEALRLEYSWIKEFAPPCNVKLKDDKAYPFLAVTIGEQVPRLLITRRKIQYATHFGPYPKVFHLRETVSLLHKIFQIRTCSPTNYKRAIASGMPCFEGQINKCFGPCSLKTTHLQYQKRIKNLMAFLEGQSSSLLESLKKKMLKASKNKEYEEAAILRDKIQAAQTVLSRSAVLLDETVSADFIAVVSDNSIASVQCFRVIAGRIKSVYSWHFEQQEDQSASELLSQSIIQVYDKLSLPKRIVLFDKPSYLSALSAHLNDKNIDRSLEIEIVYHPNEQERRLLETVKDNALSELERHRLRRSSDYTERHRSLFELQKYLNLNSLPVRIECFDISHLLGTNTSGSMVVFENGEPKKSAYRHFNIHIDQNNDTASMFSLICRRLRSLESVAQDSPDYPHLMIIDGGKPQLSAAVGALQEVGLKIPVFALSKRLEELWSPGVKTSLILPPNSESLFLLQKIRDESHRFALKQQTRRREAYLTSELFRIPGLGKQKVMQLLRRFSSFAEIRQASIEDISALPGFGVKTAEKIKECAEAFSLK.

The region spanning 11–89 (CKPGVYRFED…IKEFAPPCNV (79 aa)) is the GIY-YIG domain. One can recognise a UVR domain in the interval 201–236 (SSLLESLKKKMLKASKNKEYEEAAILRDKIQAAQTV).

This sequence belongs to the UvrC family. Interacts with UvrB in an incision complex.

It localises to the cytoplasm. Its function is as follows. The UvrABC repair system catalyzes the recognition and processing of DNA lesions. UvrC both incises the 5' and 3' sides of the lesion. The N-terminal half is responsible for the 3' incision and the C-terminal half is responsible for the 5' incision. The protein is UvrABC system protein C of Tropheryma whipplei (strain Twist) (Whipple's bacillus).